Reading from the N-terminus, the 97-residue chain is Co-chaperonin GroES (97 aa).

This sequence belongs to the GroES chaperonin family. As to quaternary structure, heptamer of 7 subunits arranged in a ring. Interacts with the chaperonin GroEL.

Its subcellular location is the cytoplasm. Functionally, together with the chaperonin GroEL, plays an essential role in assisting protein folding. The GroEL-GroES system forms a nano-cage that allows encapsulation of the non-native substrate proteins and provides a physical environment optimized to promote and accelerate protein folding. GroES binds to the apical surface of the GroEL ring, thereby capping the opening of the GroEL channel. This is Co-chaperonin GroES from Edwardsiella ictaluri (strain 93-146).